Consider the following 207-residue polypeptide: CASP-like protein 1D1 (207 aa).

The Cytoplasmic portion of the chain corresponds to 1 to 40; sequence MATVDGTTAPSSGGKTATVALESGGGRYGGPAPAKCSGAN. A helical transmembrane segment spans residues 41–61; the sequence is LALRALLFAVSLSALVVLVTA. Topologically, residues 62–89 are extracellular; the sequence is KQTVMVPFVIRPPQFILAPVPAKYTHSP. Residues 90–110 form a helical membrane-spanning segment; sequence ALIYLLAALCATCFYSLITAI. The Cytoplasmic segment spans residues 111-124; it reads SSVRLLSSSACSAK. The helical transmembrane segment at 125–145 threads the bilayer; the sequence is TLFYLILLDVFYAAVMASATG. Residues 146-176 lie on the Extracellular side of the membrane; sequence TAGAVAWVGLKGNSHTRWNKICNVYGKFCRH. Residues 177–197 traverse the membrane as a helical segment; sequence IGSSTFLALIAAIVLVLLAFL. Residues 198–207 are Cytoplasmic-facing; sequence NAYSLYRRSR.

Belongs to the Casparian strip membrane proteins (CASP) family. Homodimer and heterodimers.

The protein localises to the cell membrane. In Oryza sativa subsp. japonica (Rice), this protein is CASP-like protein 1D1.